Reading from the N-terminus, the 434-residue chain is ATP-dependent protease ATPase subunit HslU (434 aa).

ATP is bound by residues Val18, 60-65 (GVGKTE), Asp247, Glu312, and Arg384.

Belongs to the ClpX chaperone family. HslU subfamily. As to quaternary structure, a double ring-shaped homohexamer of HslV is capped on each side by a ring-shaped HslU homohexamer. The assembly of the HslU/HslV complex is dependent on binding of ATP.

The protein resides in the cytoplasm. Its function is as follows. ATPase subunit of a proteasome-like degradation complex; this subunit has chaperone activity. The binding of ATP and its subsequent hydrolysis by HslU are essential for unfolding of protein substrates subsequently hydrolyzed by HslV. HslU recognizes the N-terminal part of its protein substrates and unfolds these before they are guided to HslV for hydrolysis. The chain is ATP-dependent protease ATPase subunit HslU from Bradyrhizobium sp. (strain ORS 278).